Consider the following 482-residue polypeptide: tRNA sulfurtransferase (482 aa).

The THUMP domain occupies 61-165 (PAIRDALTRI…NDRLLLVKGR (105 aa)). ATP-binding positions include 183-184 (LI), K265, G287, and Q296. An intrachain disulfide couples C344 to C456. Residues 404 to 482 (FGANDAILDI…GFSNVKVYRP (79 aa)) form the Rhodanese domain. Catalysis depends on C456, which acts as the Cysteine persulfide intermediate.

The protein belongs to the ThiI family.

It is found in the cytoplasm. The catalysed reaction is [ThiI sulfur-carrier protein]-S-sulfanyl-L-cysteine + a uridine in tRNA + 2 reduced [2Fe-2S]-[ferredoxin] + ATP + H(+) = [ThiI sulfur-carrier protein]-L-cysteine + a 4-thiouridine in tRNA + 2 oxidized [2Fe-2S]-[ferredoxin] + AMP + diphosphate. It catalyses the reaction [ThiS sulfur-carrier protein]-C-terminal Gly-Gly-AMP + S-sulfanyl-L-cysteinyl-[cysteine desulfurase] + AH2 = [ThiS sulfur-carrier protein]-C-terminal-Gly-aminoethanethioate + L-cysteinyl-[cysteine desulfurase] + A + AMP + 2 H(+). The protein operates within cofactor biosynthesis; thiamine diphosphate biosynthesis. Catalyzes the ATP-dependent transfer of a sulfur to tRNA to produce 4-thiouridine in position 8 of tRNAs, which functions as a near-UV photosensor. Also catalyzes the transfer of sulfur to the sulfur carrier protein ThiS, forming ThiS-thiocarboxylate. This is a step in the synthesis of thiazole, in the thiamine biosynthesis pathway. The sulfur is donated as persulfide by IscS. The sequence is that of tRNA sulfurtransferase from Klebsiella pneumoniae (strain 342).